Consider the following 325-residue polypeptide: Elongation factor Ts, mitochondrial (325 aa).

The N-terminal 45 residues, 1–45, are a transit peptide targeting the mitochondrion; sequence MSLLRSLRVFLVARTGSYPAGSLLRQSPQPRHTFYAGPRLSASAS. Lys-76, Lys-133, and Lys-192 each carry N6-succinyllysine. Residue Ser-270 is modified to Phosphoserine. Thr-324 carries the post-translational modification Phosphothreonine.

It belongs to the EF-Ts family. As to expression, expressed in all tissues, with the highest levels of expression in skeletal muscle, liver and kidney.

The protein resides in the mitochondrion. Functionally, associates with the EF-Tu.GDP complex and induces the exchange of GDP to GTP. It remains bound to the aminoacyl-tRNA.EF-Tu.GTP complex up to the GTP hydrolysis stage on the ribosome. The polypeptide is Elongation factor Ts, mitochondrial (Homo sapiens (Human)).